The following is a 131-amino-acid chain: Small ribosomal subunit protein uS8 (131 aa).

It belongs to the universal ribosomal protein uS8 family. As to quaternary structure, part of the 30S ribosomal subunit. Contacts proteins S5 and S12.

Its function is as follows. One of the primary rRNA binding proteins, it binds directly to 16S rRNA central domain where it helps coordinate assembly of the platform of the 30S subunit. In Novosphingobium aromaticivorans (strain ATCC 700278 / DSM 12444 / CCUG 56034 / CIP 105152 / NBRC 16084 / F199), this protein is Small ribosomal subunit protein uS8.